Here is a 304-residue protein sequence, read N- to C-terminus: Ribonuclease Z (304 aa).

Zn(2+) contacts are provided by histidine 63, histidine 65, aspartate 67, histidine 68, histidine 143, aspartate 213, and histidine 271. Aspartate 67 serves as the catalytic Proton acceptor.

The protein belongs to the RNase Z family. In terms of assembly, homodimer. The cofactor is Zn(2+).

It carries out the reaction Endonucleolytic cleavage of RNA, removing extra 3' nucleotides from tRNA precursor, generating 3' termini of tRNAs. A 3'-hydroxy group is left at the tRNA terminus and a 5'-phosphoryl group is left at the trailer molecule.. Zinc phosphodiesterase, which displays some tRNA 3'-processing endonuclease activity. Probably involved in tRNA maturation, by removing a 3'-trailer from precursor tRNA. The protein is Ribonuclease Z of Porphyromonas gingivalis (strain ATCC 33277 / DSM 20709 / CIP 103683 / JCM 12257 / NCTC 11834 / 2561).